The primary structure comprises 241 residues: Small ribosomal subunit protein uS2 (241 aa).

The protein belongs to the universal ribosomal protein uS2 family.

The protein is Small ribosomal subunit protein uS2 of Photorhabdus laumondii subsp. laumondii (strain DSM 15139 / CIP 105565 / TT01) (Photorhabdus luminescens subsp. laumondii).